The chain runs to 338 residues: Mitochondrial glutathione transporter SLC25A40 (338 aa).

3 Solcar repeats span residues 13–131 (VTPL…LTAL), 139–223 (NESR…LKKW), and 233–327 (PTFM…GKSF). A run of 6 helical transmembrane segments spans residues 19 to 39 (MFAS…FDVV), 103 to 123 (LWSG…IYFT), 145 to 165 (IVAG…LELI), 199 to 220 (WAPT…YEVL), 239 to 259 (FTSG…FDVV), and 298 to 318 (GLFT…AVMI).

It belongs to the mitochondrial carrier (TC 2.A.29) family.

The protein localises to the mitochondrion inner membrane. It catalyses the reaction glutathione(in) = glutathione(out). Functionally, probable mitochondrial transporter required for glutathione import into mitochondria. Glutathione, which plays key roles in oxidative metabolism, is produced exclusively in the cytosol and is imported in many organelles. Mitochondrial glutathione is required for the activity and stability of proteins containing iron-sulfur clusters, as well as erythropoiesis. This is Mitochondrial glutathione transporter SLC25A40 from Bos taurus (Bovine).